Here is a 648-residue protein sequence, read N- to C-terminus: Biosynthetic arginine decarboxylase (648 aa).

K109 bears the N6-(pyridoxal phosphate)lysine mark. 291 to 301 (IDVGGGLGIDF) contributes to the substrate binding site.

This sequence belongs to the Orn/Lys/Arg decarboxylase class-II family. SpeA subfamily. Mg(2+) is required as a cofactor. The cofactor is pyridoxal 5'-phosphate.

It catalyses the reaction L-arginine + H(+) = agmatine + CO2. It participates in amine and polyamine biosynthesis; agmatine biosynthesis; agmatine from L-arginine: step 1/1. Catalyzes the biosynthesis of agmatine from arginine. The sequence is that of Biosynthetic arginine decarboxylase from Prochlorococcus marinus (strain MIT 9312).